We begin with the raw amino-acid sequence, 471 residues long: 3-isopropylmalate dehydratase large subunit (471 aa).

[4Fe-4S] cluster is bound by residues Cys347, Cys409, and Cys412.

The protein belongs to the aconitase/IPM isomerase family. LeuC type 1 subfamily. As to quaternary structure, heterodimer of LeuC and LeuD. The cofactor is [4Fe-4S] cluster.

It catalyses the reaction (2R,3S)-3-isopropylmalate = (2S)-2-isopropylmalate. Its pathway is amino-acid biosynthesis; L-leucine biosynthesis; L-leucine from 3-methyl-2-oxobutanoate: step 2/4. Catalyzes the isomerization between 2-isopropylmalate and 3-isopropylmalate, via the formation of 2-isopropylmaleate. This is 3-isopropylmalate dehydratase large subunit from Buchnera aphidicola subsp. Rhopalosiphum padi.